A 405-amino-acid chain; its full sequence is Arginine deiminase (405 aa).

Cysteine 395 acts as the Amidino-cysteine intermediate in catalysis.

This sequence belongs to the arginine deiminase family.

It localises to the cytoplasm. The catalysed reaction is L-arginine + H2O = L-citrulline + NH4(+). It functions in the pathway amino-acid degradation; L-arginine degradation via ADI pathway; carbamoyl phosphate from L-arginine: step 1/2. In Rhodococcus erythropolis (strain PR4 / NBRC 100887), this protein is Arginine deiminase.